A 207-amino-acid polypeptide reads, in one-letter code: Large ribosomal subunit protein uL4 (207 aa).

The segment at 48-75 (THSVKNRSAVRGGGRKPWRQKGTGRARQ) is disordered. Positions 60–71 (GGRKPWRQKGTG) are enriched in basic residues.

The protein belongs to the universal ribosomal protein uL4 family. As to quaternary structure, part of the 50S ribosomal subunit.

Its function is as follows. One of the primary rRNA binding proteins, this protein initially binds near the 5'-end of the 23S rRNA. It is important during the early stages of 50S assembly. It makes multiple contacts with different domains of the 23S rRNA in the assembled 50S subunit and ribosome. Functionally, forms part of the polypeptide exit tunnel. The chain is Large ribosomal subunit protein uL4 from Staphylococcus carnosus (strain TM300).